Here is a 108-residue protein sequence, read N- to C-terminus: Hrp pili protein HrpA (108 aa).

Residues 41 to 56 are compositionally biased toward polar residues; sequence NTGSTDSIDATRSSIS. Residues 41-73 form a disordered region; sequence NTGSTDSIDATRSSISKGDAKSAELDGTANEEN.

It belongs to the HrpA type 1 family.

The protein resides in the secreted. It localises to the fimbrium. Major structural protein of the hrp pilus, which is a component of the type III secretion system (T3SS, Hrp secretion system) required for effector protein delivery, parasitism, and pathogenicity. The hrp pilus functions as a conduit for protein delivery into the host cell. Also, affects the expression of T3SS-associated genes. Required for full expression of genes that encode regulatory, secretion, and effector proteins of the T3SS. HrpA-mediated gene regulation apparently is through effect on the mRNA level of HrpR and HrpS. The sequence is that of Hrp pili protein HrpA (hrpA) from Pseudomonas syringae pv. syringae.